The primary structure comprises 298 residues: Cyclin-dependent kinase 2 (298 aa).

The Protein kinase domain maps to 4–286 (FQKVEKIGEG…AKNALVHRFF (283 aa)). Residues 10–18 (IGEGTYGVV), Lys-33, 81–83 (EFL), and Asp-86 contribute to the ATP site. Position 14 is a phosphothreonine (Thr-14). The residue at position 15 (Tyr-15) is a Phosphotyrosine. The active-site Proton acceptor is the Asp-127. Residues 129 to 132 (KPQN) and Asp-145 each bind ATP. Thr-160 is modified (phosphothreonine; by CAK).

Belongs to the protein kinase superfamily. CMGC Ser/Thr protein kinase family. CDC2/CDKX subfamily.

It catalyses the reaction L-seryl-[protein] + ATP = O-phospho-L-seryl-[protein] + ADP + H(+). The catalysed reaction is L-threonyl-[protein] + ATP = O-phospho-L-threonyl-[protein] + ADP + H(+). Phosphorylation at Thr-14 or Tyr-15 inactivates the enzyme, while phosphorylation at Thr-160 activates it. Serine/threonine-protein kinase involved in the control of the cell cycle; essential for meiosis, but dispensable for mitosis. Triggers duplication of centrosomes and DNA. Acts at the G1-S transition to promote the E2F transcriptional program and the initiation of DNA synthesis, and modulates G2 progression; controls the timing of entry into mitosis/meiosis by controlling the subsequent activation of cyclin B/CDK1 by phosphorylation, and coordinates the activation of cyclin B/CDK1 at the centrosome and in the nucleus. Crucial role in orchestrating a fine balance between cellular proliferation, cell death, and DNA repair in embryonic stem cells (ESCs). Activity of CDK2 is maximal during S phase and G2; activated by interaction with cyclin E during the early stages of DNA synthesis to permit G1-S transition, and subsequently activated by cyclin A2 (cyclin A1 in germ cells) during the late stages of DNA replication to drive the transition from S phase to mitosis, the G2 phase. The protein is Cyclin-dependent kinase 2 (cdk2) of Carassius auratus (Goldfish).